A 296-amino-acid polypeptide reads, in one-letter code: dTDP-rhamnosyl transferase RfbF (296 aa).

This sequence belongs to the glycosyltransferase 2 family.

The protein operates within bacterial outer membrane biogenesis; lipopolysaccharide biosynthesis. The protein is dTDP-rhamnosyl transferase RfbF (rfbF) of Shigella flexneri.